Reading from the N-terminus, the 340-residue chain is Probable rRNA-processing protein EBP2 homolog (340 aa).

Over residues 1–10 the composition is skewed to basic residues; that stretch reads MVRKMNKLAK. Disordered stretches follow at residues 1–59 and 245–340; these read MVRK…DDDE and HGLD…RGRR. Composition is skewed to acidic residues over residues 23–37 and 46–59; these read PESD…FDNA and MDIE…DDDE. Residues 206-245 are a coiled coil; that stretch reads QKEVLAAKNTEKKNLAEAVKKHKKGMKQQLEDMLNNVKRH. 2 stretches are compositionally biased toward gly residues: residues 264-277 and 318-333; these read GRGG…GRGG and PRGG…GRGG.

Belongs to the EBP2 family.

The protein resides in the nucleus. It localises to the nucleolus. In terms of biological role, required for the processing of the 27S pre-rRNA. The polypeptide is Probable rRNA-processing protein EBP2 homolog (Caenorhabditis elegans).